We begin with the raw amino-acid sequence, 442 residues long: Serine--tRNA ligase (442 aa).

244–246 contributes to the L-serine binding site; it reads TAE. Residue 275-277 participates in ATP binding; that stretch reads RAE. Glu-298 is an L-serine binding site. Position 365–368 (365–368) interacts with ATP; it reads EISS. Ser-400 is a binding site for L-serine.

It belongs to the class-II aminoacyl-tRNA synthetase family. Type-1 seryl-tRNA synthetase subfamily. In terms of assembly, homodimer. The tRNA molecule binds across the dimer.

It localises to the cytoplasm. The catalysed reaction is tRNA(Ser) + L-serine + ATP = L-seryl-tRNA(Ser) + AMP + diphosphate + H(+). It catalyses the reaction tRNA(Sec) + L-serine + ATP = L-seryl-tRNA(Sec) + AMP + diphosphate + H(+). It functions in the pathway aminoacyl-tRNA biosynthesis; selenocysteinyl-tRNA(Sec) biosynthesis; L-seryl-tRNA(Sec) from L-serine and tRNA(Sec): step 1/1. Catalyzes the attachment of serine to tRNA(Ser). Is also able to aminoacylate tRNA(Sec) with serine, to form the misacylated tRNA L-seryl-tRNA(Sec), which will be further converted into selenocysteinyl-tRNA(Sec). The polypeptide is Serine--tRNA ligase (Bradyrhizobium sp. (strain BTAi1 / ATCC BAA-1182)).